An 831-amino-acid chain; its full sequence is Periplasmic nitrate reductase (831 aa).

A signal peptide (tat-type signal) is located at residues M1–A29. A 4Fe-4S Mo/W bis-MGD-type domain is found at I41–D97. Positions 48, 51, 55, and 83 each coordinate [4Fe-4S] cluster. Residues K85, Q152, N177, C181, W214–M221, S245–H249, Q264–D266, M374, Q378, N484, S510–D511, K533, D560, and T720–S729 each bind Mo-bis(molybdopterin guanine dinucleotide). Residue W796 coordinates substrate. Mo-bis(molybdopterin guanine dinucleotide) is bound by residues N804 and K821.

Belongs to the prokaryotic molybdopterin-containing oxidoreductase family. NasA/NapA/NarB subfamily. Component of the periplasmic nitrate reductase NapAB complex composed of NapA and NapB. [4Fe-4S] cluster is required as a cofactor. Mo-bis(molybdopterin guanine dinucleotide) serves as cofactor. In terms of processing, predicted to be exported by the Tat system. The position of the signal peptide cleavage has not been experimentally proven.

The protein resides in the periplasm. It catalyses the reaction 2 Fe(II)-[cytochrome] + nitrate + 2 H(+) = 2 Fe(III)-[cytochrome] + nitrite + H2O. Functionally, catalytic subunit of the periplasmic nitrate reductase complex NapAB. Receives electrons from NapB and catalyzes the reduction of nitrate to nitrite. The sequence is that of Periplasmic nitrate reductase from Psychromonas ingrahamii (strain DSM 17664 / CCUG 51855 / 37).